Consider the following 104-residue polypeptide: ESAT-6-like protein (104 aa).

The stretch at Met12–His43 forms a coiled coil.

It belongs to the WXG100 family. CFP-10 subfamily. As to quaternary structure, in isolation forms a homodimer. Forms a tight 1:1 complex with EsxA. Forms a complex with EsxA and EccC, probably wholly mediated by EsxB; binds in a pocket in the third FtsK (ATPase) domain of EccC (residues 1163-1208).

It is found in the secreted. Its function is as follows. May help regulate assembly and function of the type VII secretion system (T7SS). Binds to EccC and induces its multimerization. May serve as a chaperone for EsxA. In Thermomonospora curvata (strain ATCC 19995 / DSM 43183 / JCM 3096 / KCTC 9072 / NBRC 15933 / NCIMB 10081 / Henssen B9), this protein is ESAT-6-like protein.